Consider the following 780-residue polypeptide: ATP-dependent 6-phosphofructokinase, liver type (780 aa).

Alanine 2 bears the N-acetylalanine mark. The N-terminal catalytic PFK domain 1 stretch occupies residues 2–390 (ATVDLEKLRM…NWKIYKLLAH (389 aa)). Residues glycine 25, 88-89 (RC), and 118-121 (GDGS) each bind ATP. Mg(2+) is bound at residue aspartate 119. Substrate-binding positions include 164 to 166 (SID), arginine 201, 208 to 210 (MGR), glutamate 264, arginine 292, and 298 to 301 (HVQR). The active-site Proton acceptor is aspartate 166. Position 377 is a phosphoserine (serine 377). An interdomain linker region spans residues 391–400 (QKVSKEKSNF). Residues 401 to 780 (SLAILNVGAP…RRTLSIDKGF (380 aa)) are C-terminal regulatory PFK domain 2. Beta-D-fructose 2,6-bisphosphate contacts are provided by residues arginine 470, 527-531 (TISNN), arginine 565, 572-574 (MGG), and glutamate 628. Serine 529 carries an O-linked (GlcNAc) serine glycan. Tyrosine 640 carries the phosphotyrosine modification. Beta-D-fructose 2,6-bisphosphate contacts are provided by residues arginine 654, 660-663 (HLQQ), and arginine 734. Serine 775 bears the Phosphoserine mark.

It belongs to the phosphofructokinase type A (PFKA) family. ATP-dependent PFK group I subfamily. Eukaryotic two domain clade 'E' sub-subfamily. Homo- and heterotetramers. Phosphofructokinase (PFK) enzyme functions as a tetramer composed of different combinations of 3 types of subunits, called PFKM (M), PFKL (L) and PFKP (P). The composition of the PFK tetramer differs according to the tissue type it is present in. The kinetic and regulatory properties of the tetrameric enzyme are dependent on the subunit composition, hence can vary across tissues. The cofactor is Mg(2+). Post-translationally, glcNAcylation at Ser-529 by OGT decreases enzyme activity, leading to redirect glucose flux through the oxidative pentose phosphate pathway. Glycosylation is stimulated by both hypoxia and glucose deprivation.

It localises to the cytoplasm. The catalysed reaction is beta-D-fructose 6-phosphate + ATP = beta-D-fructose 1,6-bisphosphate + ADP + H(+). It functions in the pathway carbohydrate degradation; glycolysis; D-glyceraldehyde 3-phosphate and glycerone phosphate from D-glucose: step 3/4. Its activity is regulated as follows. Allosterically activated by ADP, AMP, or fructose 2,6-bisphosphate, and allosterically inhibited by ATP or citrate. GlcNAcylation by OGT overcomes allosteric regulation. Its function is as follows. Catalyzes the phosphorylation of D-fructose 6-phosphate to fructose 1,6-bisphosphate by ATP, the first committing step of glycolysis. Negatively regulates the phagocyte oxidative burst in response to bacterial infection by controlling cellular NADPH biosynthesis and NADPH oxidase-derived reactive oxygen species. Upon macrophage activation, drives the metabolic switch toward glycolysis, thus preventing glucose turnover that produces NADPH via pentose phosphate pathway. The chain is ATP-dependent 6-phosphofructokinase, liver type (Pfkl) from Rattus norvegicus (Rat).